Consider the following 413-residue polypeptide: Multidrug resistance protein MdtA (413 aa).

Positions Met-1 to Ala-32 are cleaved as a signal peptide. Positions Ala-32–His-46 are enriched in polar residues. The segment at Ala-32–Arg-59 is disordered.

It belongs to the membrane fusion protein (MFP) (TC 8.A.1) family. Part of a tripartite efflux system composed of MdtA, MdtB and MdtC.

It is found in the cell inner membrane. The polypeptide is Multidrug resistance protein MdtA (Pectobacterium carotovorum subsp. carotovorum (strain PC1)).